Here is a 443-residue protein sequence, read N- to C-terminus: Serine/threonine-protein kinase 40 (443 aa).

A compositionally biased stretch (basic and acidic residues) spans 1–11 (MKRRASERDAG). The segment at 1–26 (MKRRASERDAGETSARSKALCSSISG) is disordered. Positions 14-26 (SARSKALCSSISG) are enriched in polar residues. Residues 35-332 (FILGPRLGNS…EVLESLGAII (298 aa)) form the Protein kinase domain. ATP contacts are provided by residues 41–49 (LGNSPVPSI) and lysine 66. Aspartate 197 functions as the Proton acceptor in the catalytic mechanism.

It belongs to the protein kinase superfamily. CAMK Ser/Thr protein kinase family.

It localises to the nucleus. It is found in the cytoplasm. It catalyses the reaction L-seryl-[protein] + ATP = O-phospho-L-seryl-[protein] + ADP + H(+). The catalysed reaction is L-threonyl-[protein] + ATP = O-phospho-L-threonyl-[protein] + ADP + H(+). Its function is as follows. May be a negative regulator of NF-kappa-B and p53-mediated gene transcription. The protein is Serine/threonine-protein kinase 40 (stk40) of Xenopus tropicalis (Western clawed frog).